We begin with the raw amino-acid sequence, 83 residues long: UPF0729 protein CBG02799 (83 aa).

The segment at 51–83 (QEKKEEEEEKEKSCCSTEAENTTEVTTETKKDQ) is disordered. Low complexity predominate over residues 67–76 (TEAENTTEVT).

The protein belongs to the UPF0729 family.

The chain is UPF0729 protein CBG02799 from Caenorhabditis briggsae.